Here is a 120-residue protein sequence, read N- to C-terminus: uncharacterized protein (120 aa).

This is an uncharacterized protein from Bacillus subtilis (strain 168).